A 9702-amino-acid chain; its full sequence is Nonribosomal peptide synthetase ungA (9702 aa).

Residues 248 to 647 (EQAQLRPHAP…ARKDTQVKIR (400 aa)) form an adenylation 1 region. The 78-residue stretch at 775–852 (APQTEMEYRL…MARAAQEKQT (78 aa)) folds into the Carrier 1 domain. Ser812 carries the O-(pantetheine 4'-phosphoryl)serine modification. Positions 891–1288 (DILPCTPLQE…EAVLRHVCSQ (398 aa)) are condensation 1. Residues 1330-1730 (QRTQQQPDAP…GRKDTQVKIR (401 aa)) are adenylation 2. One can recognise a Carrier 2 domain in the interval 1857–1933 (LPQSPMEKSL…RLARREIQTD (77 aa)). The residue at position 1894 (Ser1894) is an O-(pantetheine 4'-phosphoryl)serine. Positions 1946–2374 (PFALSPIQQF…ERALEGTAVQ (429 aa)) are epimerization 1. The segment at 2414–2842 (EDIYPCSPLQ…LDTAILSPQD (429 aa)) is condensation 2. An adenylation 3 region spans residues 2868-3267 (QVERQPDALA…GRKDTQVKIR (400 aa)). The region spanning 3397-3473 (APTTEMERHL…EMSQVAKLGS (77 aa)) is the Carrier 3 domain. Position 3434 is an O-(pantetheine 4'-phosphoryl)serine (Ser3434). The tract at residues 3512–3920 (EDVFPCTPLQ…LLCDASHHQS (409 aa)) is condensation 3. Residues 3957–4361 (KQTQRRSAAQ…GRKDAQVKIR (405 aa)) are adenylation 4. Positions 4491–4568 (PPTTDLERQI…LALSVSAAVD (78 aa)) constitute a Carrier 4 domain. The residue at position 4528 (Ser4528) is an O-(pantetheine 4'-phosphoryl)serine. The tract at residues 4583–5013 (ALSPIQQMFA…QAAAQALPLL (431 aa)) is epimerization 2. The tract at residues 5049–5474 (VEDIYPCSPL…ANIISHQDLE (426 aa)) is condensation 4. The segment at 5496–5899 (MQQAESQPGA…GRKDNQVKIH (404 aa)) is adenylation 5. One can recognise a Carrier 5 domain in the interval 6033–6110 (TASSPEELEL…LVSHAQGNTA (78 aa)). Ser6070 is subject to O-(pantetheine 4'-phosphoryl)serine. Residues 6127-6551 (ELSPIQQLFF…CKSSLEAAAA (425 aa)) form an epimerization 3 region. The segment at 6593–6935 (VEDIYPCAPI…TGISVQGGAA (343 aa)) is condensation 5. The tract at residues 7047–7447 (KRPDAPAIDA…GRRDNQVKVR (401 aa)) is adenylation 6. Positions 7575–7655 (GPQTEVERLL…RSARTVQGHV (81 aa)) constitute a Carrier 6 domain. Position 7613 is an O-(pantetheine 4'-phosphoryl)serine (Ser7613). Residues 7670 to 8106 (DLAPVQQMFA…LVTASELLMQ (437 aa)) are epimerization 4. Residues 8144 to 8588 (VEDIYPCSPI…EVDLSTDHDQ (445 aa)) form a condensation 6 region. The segment at 8612 to 9025 (NTVQKQPHST…GRKDSQVKIR (414 aa)) is adenylation 7. The 79-residue stretch at 9158 to 9236 (SPTAPMERRL…LALLVREGDA (79 aa)) folds into the Carrier 7 domain. Residue Ser9196 is modified to O-(pantetheine 4'-phosphoryl)serine. Residues 9282-9629 (DVYPTTDLQN…DNLEHDPGTA (348 aa)) form a condensation 7 region.

This sequence belongs to the NRP synthetase family.

Its pathway is secondary metabolite biosynthesis. Nonribosomal peptide synthetase; part of the gene cluster that mediates the biosynthesis of the unguisins, gamma-aminobutyric acid (GABA)-containing fungal cyclic heptapeptides with the amino acid sequence cyclo-(D-Ala1-D-Val2-L-Phe3-D-Val4-D-Ala5-D-Trp6-GABA7) for unguisin A and cyclo-(D-Ala1-D-Val2-L-Leu3-D-Val4-D-Ala5-D-Trp6-GABA7) for unguisin B. UngA is the main enzyme within the cluster which condenses the 7 residues using its respective 7 modules. The terminal condensation domain (Ct) is involved in cyclization with D-alanine and thereby releasing of unguisins A and B. The alanine racemase ungC provides D-alanine, which is then accepted by the first adenylation domain of ungA. Finally, the hydrolase ungD catalyzes the hydrolysis between the D-tryptophan and GABA residues of unguisins A and B to produce the corresponding linear peptides. This Aspergillus violaceofuscus (strain CBS 115571) protein is Nonribosomal peptide synthetase ungA.